A 396-amino-acid polypeptide reads, in one-letter code: S-adenosylmethionine synthase (396 aa).

His-16 provides a ligand contact to ATP. Asp-18 provides a ligand contact to Mg(2+). Glu-44 lines the K(+) pocket. Residues Glu-57 and Gln-100 each contribute to the L-methionine site. Residues 100–110 form a flexible loop region; the sequence is QSPDINQGVDR. ATP is bound by residues 165 to 167, 231 to 232, Asp-240, 246 to 247, Ala-263, and Lys-267; these read DAK, KF, and RK. L-methionine is bound at residue Asp-240. Residue Lys-271 participates in L-methionine binding.

The protein belongs to the AdoMet synthase family. In terms of assembly, homotetramer; dimer of dimers. It depends on Mg(2+) as a cofactor. The cofactor is K(+).

The protein resides in the cytoplasm. The catalysed reaction is L-methionine + ATP + H2O = S-adenosyl-L-methionine + phosphate + diphosphate. Its pathway is amino-acid biosynthesis; S-adenosyl-L-methionine biosynthesis; S-adenosyl-L-methionine from L-methionine: step 1/1. Its function is as follows. Catalyzes the formation of S-adenosylmethionine (AdoMet) from methionine and ATP. The overall synthetic reaction is composed of two sequential steps, AdoMet formation and the subsequent tripolyphosphate hydrolysis which occurs prior to release of AdoMet from the enzyme. The sequence is that of S-adenosylmethionine synthase from Ectopseudomonas mendocina (strain ymp) (Pseudomonas mendocina).